The following is a 513-amino-acid chain: Maturase K (513 aa).

It belongs to the intron maturase 2 family. MatK subfamily.

Its subcellular location is the plastid. The protein localises to the chloroplast. Functionally, usually encoded in the trnK tRNA gene intron. Probably assists in splicing its own and other chloroplast group II introns. The chain is Maturase K from Danthonia spicata (Poverty oatgrass).